The primary structure comprises 113 residues: Tachykinin-4 (113 aa).

An N-terminal signal peptide occupies residues 1–20; that stretch reads MLPCLALLLLMELSVCTVAG. Met-67 bears the Methionine amide mark. Residues 71–79 constitute a propeptide that is removed on maturation; sequence VGGRPLIQP. Leu-95 carries the leucine amide modification. The propeptide occupies 98-113; it reads RSLFTEGREDEAQGSE.

It belongs to the tachykinin family. Expressed at low levels in the uterus of both pregnant and non-pregnant women. Isoform 1 is found only in the adrenal gland and fetal liver. Isoform 2 is found in heart, liver, bone marrow, prostate, adrenal gland and testis. Isoform 3 and isoform 4 are expressed predominantly in adrenal gland and placenta.

Its subcellular location is the secreted. Its function is as follows. Tachykinins are active peptides which excite neurons, evoke behavioral responses, are potent vasodilators and secretagogues, and contract (directly or indirectly) many smooth muscles. Endokinin-A induces thermal hyperalgesia and pain-related behavior such as scratching following intrathecal administration in rats. These effects are suppressed by treatment with endokinin-C. Endokinin-A/B reduces arterial blood pressure and increases sperm motility. The sequence is that of Tachykinin-4 from Homo sapiens (Human).